We begin with the raw amino-acid sequence, 89 residues long: Probable Fe(2+)-trafficking protein (89 aa).

This sequence belongs to the Fe(2+)-trafficking protein family.

Functionally, could be a mediator in iron transactions between iron acquisition and iron-requiring processes, such as synthesis and/or repair of Fe-S clusters in biosynthetic enzymes. The chain is Probable Fe(2+)-trafficking protein from Stenotrophomonas maltophilia (strain R551-3).